A 140-amino-acid chain; its full sequence is Lipoprotein MlpD (140 aa).

An N-terminal signal peptide occupies residues 1–17 (MKIINILFCLFLLMLNG). C18 carries N-palmitoyl cysteine lipidation. C18 carries the S-diacylglycerol cysteine lipid modification. A disordered region spans residues 22 to 53 (DTNNSQTKSRQKRDLTQKEATQEKPKSKEELL). Positions 33 to 53 (KRDLTQKEATQEKPKSKEELL) are enriched in basic and acidic residues.

It belongs to the Multicopy lipoprotein (Mlp) family.

It localises to the cell outer membrane. Its function is as follows. An outer membrane protein that may participate in pathogenesis. Some human Lyme disease patients have antibodies against this protein. The Mlp proteins probably undergo intragenic recombination, generating new alleles. The sequence is that of Lipoprotein MlpD from Borreliella burgdorferi (strain ATCC 35210 / DSM 4680 / CIP 102532 / B31) (Borrelia burgdorferi).